Here is a 204-residue protein sequence, read N- to C-terminus: Large ribosomal subunit protein eL15 (204 aa).

2 disordered regions span residues 71-91 and 159-182; these read RKRP…GVNQ and REMR…HYSQ. Residues 159–174 show a composition bias toward basic residues; sequence REMRGKTSAGRKHRGL.

It belongs to the eukaryotic ribosomal protein eL15 family.

The protein is Large ribosomal subunit protein eL15 (RPL15) of Faxonius limosus (Spinycheek crayfish).